The following is a 286-amino-acid chain: Protein HEXIM2 (286 aa).

A compositionally biased stretch (polar residues) spans methionine 1–asparagine 11. The interval methionine 1–glutamate 195 is disordered. Serine 29 bears the Phosphoserine mark. A Phosphothreonine modification is found at threonine 32. Serine 39 bears the Phosphoserine mark. Position 46 is a phosphothreonine (threonine 46). 5 positions are modified to phosphoserine: serine 51, serine 53, serine 71, serine 76, and serine 81. The span at asparagine 68–glycine 78 shows a compositional bias: polar residues. Residues alanine 87 to arginine 103 are compositionally biased toward basic residues. Over residues lysine 113 to phenylalanine 132 the composition is skewed to basic and acidic residues. Positions proline 140–threonine 143 are interaction with P-TEFb. Residues serine 178–glutamate 195 are compositionally biased toward basic and acidic residues. The stretch at glycine 207–glycine 277 forms a coiled coil. Positions glutamine 226–threonine 286 are interaction with CCNT1, HEXIM1 and HEXIM2.

It belongs to the HEXIM family. Homooligomer and heterooligomer with HEXIM1; probably dimeric. Core component of the 7SK RNP complex, at least composed of 7SK RNA, LARP7, MEPCE, HEXIM1 (or HEXIM2) and P-TEFb (composed of CDK9 and CCNT1/cyclin-T1). Interacts with CCNT2. In terms of tissue distribution, ubiquitously expressed with higher expression in testis. HEXIM1 and HEXIM2 are differentially expressed.

It localises to the nucleus. In terms of biological role, transcriptional regulator which functions as a general RNA polymerase II transcription inhibitor. Core component of the 7SK RNP complex: in cooperation with 7SK snRNA sequesters P-TEFb in a large inactive 7SK snRNP complex preventing RNA polymerase II phosphorylation and subsequent transcriptional elongation. In Homo sapiens (Human), this protein is Protein HEXIM2 (HEXIM2).